The primary structure comprises 64 residues: Potassium channel toxin alpha-KTx J123 (64 aa).

An N-terminal signal peptide occupies residues 1–21 (MNKVYLVAVLVLFLALTINES). Cystine bridges form between Cys30-Cys52, Cys37-Cys60, and Cys41-Cys62.

It belongs to the short scorpion toxin superfamily. Potassium channel inhibitor family. Alpha-KTx 11 subfamily. In terms of tissue distribution, expressed by the venom gland.

The protein resides in the secreted. Functionally, this recombinant toxin inhibits mammalian voltage-gated potassium channels Kv1.3/KCNA3 (IC(50)=0.79 nM) and Kv1.2/KCNA2 (IC(50)=26.4 nM). The polypeptide is Potassium channel toxin alpha-KTx J123 (Olivierus martensii (Manchurian scorpion)).